A 509-amino-acid polypeptide reads, in one-letter code: Nucleoprotein (509 aa).

The tract at residues 1–404 (MSSVLKAYER…ANTLAKLTTA (404 aa)) is ncore. RNA-binding residues include Lys-180, Arg-195, Tyr-260, Tyr-350, and Arg-354. The tract at residues 405–509 (NRGADTRGGV…LNAALGDLDI (105 aa)) is ntail. The interval 452 to 477 (GTHDDEMPPLEEEEEDDTSAGPRTGP) is disordered. The segment covering 458–469 (MPPLEEEEEDDT) has biased composition (acidic residues).

It belongs to the paramyxoviruses nucleocapsid family. As to quaternary structure, homomultimer; forms the nucleocapsid. Binds to the viral genomic RNA. N0 interacts with the phosphoprotein (via N-terminus); this interaction allows P to chaperon N0 to avoid N polymerization before encapsidation. Interacts as N-RNA template with the phosphoprotein (via C-terminus); this interaction positions the polymerase on the template.

The protein localises to the virion. It localises to the host cytoplasm. In terms of biological role, forms the helical nucleocapsid (NC), protecting the genome from nucleases. The encapsidated genomic RNA serves as template for transcription and replication; encapsidation by N is coupled to RNA synthesis. Forms the encapsidation complex with the phosphoprotein protein P. Before encapsidation, the newly synthesized free N protein, so-called N0, is chaperoned by P. The protein is Nucleoprotein (NP) of Canis lupus familiaris (Dog).